A 326-amino-acid polypeptide reads, in one-letter code: Phospho-N-acetylmuramoyl-pentapeptide-transferase (326 aa).

The next 10 helical transmembrane spans lie at 5–25 (GLLI…PIFI), 51–71 (TPTM…LIMA), 82–102 (VWLL…DDFI), 122–142 (IIIA…TVIY), 148–168 (LQFD…VGAS), 180–200 (LLAG…WYGI), 204–224 (VVAV…VFNA), 229–249 (VFMG…ISIL), 252–272 (LEIL…SVII), and 304–324 (VVTT…YIEV).

It belongs to the glycosyltransferase 4 family. MraY subfamily. The cofactor is Mg(2+).

Its subcellular location is the cell membrane. The enzyme catalyses UDP-N-acetyl-alpha-D-muramoyl-L-alanyl-gamma-D-glutamyl-meso-2,6-diaminopimeloyl-D-alanyl-D-alanine + di-trans,octa-cis-undecaprenyl phosphate = di-trans,octa-cis-undecaprenyl diphospho-N-acetyl-alpha-D-muramoyl-L-alanyl-D-glutamyl-meso-2,6-diaminopimeloyl-D-alanyl-D-alanine + UMP. Its pathway is cell wall biogenesis; peptidoglycan biosynthesis. Functionally, catalyzes the initial step of the lipid cycle reactions in the biosynthesis of the cell wall peptidoglycan: transfers peptidoglycan precursor phospho-MurNAc-pentapeptide from UDP-MurNAc-pentapeptide onto the lipid carrier undecaprenyl phosphate, yielding undecaprenyl-pyrophosphoryl-MurNAc-pentapeptide, known as lipid I. This Oceanobacillus iheyensis (strain DSM 14371 / CIP 107618 / JCM 11309 / KCTC 3954 / HTE831) protein is Phospho-N-acetylmuramoyl-pentapeptide-transferase.